Reading from the N-terminus, the 373-residue chain is Transaldolase (373 aa).

Lys143 acts as the Schiff-base intermediate with substrate in catalysis.

It belongs to the transaldolase family. Type 2 subfamily.

It is found in the cytoplasm. The enzyme catalyses D-sedoheptulose 7-phosphate + D-glyceraldehyde 3-phosphate = D-erythrose 4-phosphate + beta-D-fructose 6-phosphate. It participates in carbohydrate degradation; pentose phosphate pathway; D-glyceraldehyde 3-phosphate and beta-D-fructose 6-phosphate from D-ribose 5-phosphate and D-xylulose 5-phosphate (non-oxidative stage): step 2/3. Its function is as follows. Transaldolase is important for the balance of metabolites in the pentose-phosphate pathway. In Mycobacterium ulcerans (strain Agy99), this protein is Transaldolase.